Here is a 335-residue protein sequence, read N- to C-terminus: uncharacterized protein (335 aa).

Residue 28 to 35 participates in ATP binding; that stretch reads GPINSGKT.

Belongs to the archaeal ATPase family.

This is an uncharacterized protein from Pyrococcus abyssi (strain GE5 / Orsay).